The sequence spans 384 residues: Spermidine/putrescine import ATP-binding protein PotA (384 aa).

The ABC transporter domain occupies Ile6 to Ile238. ATP is bound at residue Gly40–Ser47.

This sequence belongs to the ABC transporter superfamily. Spermidine/putrescine importer (TC 3.A.1.11.1) family. As to quaternary structure, the complex is composed of two ATP-binding proteins (PotA), two transmembrane proteins (PotB and PotC) and a solute-binding protein (PotD).

The protein resides in the cell membrane. The enzyme catalyses ATP + H2O + polyamine-[polyamine-binding protein]Side 1 = ADP + phosphate + polyamineSide 2 + [polyamine-binding protein]Side 1.. In terms of biological role, part of the ABC transporter complex PotABCD involved in spermidine/putrescine import. Responsible for energy coupling to the transport system. In Streptococcus pyogenes serotype M18 (strain MGAS8232), this protein is Spermidine/putrescine import ATP-binding protein PotA.